Here is a 493-residue protein sequence, read N- to C-terminus: Glutamyl-tRNA(Gln) amidotransferase subunit A (493 aa).

Residues K79 and S159 each act as charge relay system in the active site. The Acyl-ester intermediate role is filled by S183.

Belongs to the amidase family. GatA subfamily. As to quaternary structure, heterotrimer of A, B and C subunits.

It carries out the reaction L-glutamyl-tRNA(Gln) + L-glutamine + ATP + H2O = L-glutaminyl-tRNA(Gln) + L-glutamate + ADP + phosphate + H(+). Its function is as follows. Allows the formation of correctly charged Gln-tRNA(Gln) through the transamidation of misacylated Glu-tRNA(Gln) in organisms which lack glutaminyl-tRNA synthetase. The reaction takes place in the presence of glutamine and ATP through an activated gamma-phospho-Glu-tRNA(Gln). The sequence is that of Glutamyl-tRNA(Gln) amidotransferase subunit A from Rhizobium johnstonii (strain DSM 114642 / LMG 32736 / 3841) (Rhizobium leguminosarum bv. viciae).